The primary structure comprises 420 residues: Putative kinase Y4mE (420 aa).

Residue Asp-302 is the Proton acceptor of the active site.

This sequence belongs to the HipA Ser/Thr kinase family.

The protein is Putative kinase Y4mE of Sinorhizobium fredii (strain NBRC 101917 / NGR234).